The primary structure comprises 744 residues: Phosphoribosylformylglycinamidine synthase subunit PurL (744 aa).

Histidine 50 is a catalytic residue. ATP is bound by residues tyrosine 53 and lysine 92. Glutamate 94 provides a ligand contact to Mg(2+). Substrate-binding positions include 95–98 (SHNH) and arginine 117. The active-site Proton acceptor is histidine 96. Aspartate 118 serves as a coordination point for Mg(2+). Residue glutamine 241 participates in substrate binding. Mg(2+) is bound at residue aspartate 269. 313-315 (ESQ) contributes to the substrate binding site. Aspartate 494 and glycine 531 together coordinate ATP. Asparagine 532 contacts Mg(2+). Serine 534 provides a ligand contact to substrate.

Belongs to the FGAMS family. In terms of assembly, monomer. Part of the FGAM synthase complex composed of 1 PurL, 1 PurQ and 2 PurS subunits.

It is found in the cytoplasm. It catalyses the reaction N(2)-formyl-N(1)-(5-phospho-beta-D-ribosyl)glycinamide + L-glutamine + ATP + H2O = 2-formamido-N(1)-(5-O-phospho-beta-D-ribosyl)acetamidine + L-glutamate + ADP + phosphate + H(+). It participates in purine metabolism; IMP biosynthesis via de novo pathway; 5-amino-1-(5-phospho-D-ribosyl)imidazole from N(2)-formyl-N(1)-(5-phospho-D-ribosyl)glycinamide: step 1/2. Its function is as follows. Part of the phosphoribosylformylglycinamidine synthase complex involved in the purines biosynthetic pathway. Catalyzes the ATP-dependent conversion of formylglycinamide ribonucleotide (FGAR) and glutamine to yield formylglycinamidine ribonucleotide (FGAM) and glutamate. The FGAM synthase complex is composed of three subunits. PurQ produces an ammonia molecule by converting glutamine to glutamate. PurL transfers the ammonia molecule to FGAR to form FGAM in an ATP-dependent manner. PurS interacts with PurQ and PurL and is thought to assist in the transfer of the ammonia molecule from PurQ to PurL. In Chelativorans sp. (strain BNC1), this protein is Phosphoribosylformylglycinamidine synthase subunit PurL.